The following is a 290-amino-acid chain: Ribosomal RNA small subunit methyltransferase A (290 aa).

S-adenosyl-L-methionine-binding residues include Asn27, Leu29, Gly54, Glu75, Asp100, and Asn125.

This sequence belongs to the class I-like SAM-binding methyltransferase superfamily. rRNA adenine N(6)-methyltransferase family. RsmA subfamily.

The protein resides in the cytoplasm. The catalysed reaction is adenosine(1518)/adenosine(1519) in 16S rRNA + 4 S-adenosyl-L-methionine = N(6)-dimethyladenosine(1518)/N(6)-dimethyladenosine(1519) in 16S rRNA + 4 S-adenosyl-L-homocysteine + 4 H(+). Specifically dimethylates two adjacent adenosines (A1518 and A1519) in the loop of a conserved hairpin near the 3'-end of 16S rRNA in the 30S particle. May play a critical role in biogenesis of 30S subunits. The sequence is that of Ribosomal RNA small subunit methyltransferase A from Streptococcus pyogenes serotype M18 (strain MGAS8232).